The primary structure comprises 322 residues: Large ribosomal subunit protein uL10 (322 aa).

The segment at 294–322 (APAAAAKAEKEEEPAEESDDEMGFGLFDE) is disordered. The span at 304–322 (EEEPAEESDDEMGFGLFDE) shows a compositional bias: acidic residues.

Belongs to the universal ribosomal protein uL10 family. P0 forms a pentameric complex by interaction with dimers of P1 and P2. Post-translationally, phosphorylated.

Functionally, ribosomal protein P0 is the functional equivalent of E.coli protein L10. The polypeptide is Large ribosomal subunit protein uL10 (Lupinus luteus (European yellow lupine)).